Reading from the N-terminus, the 453-residue chain is MSPQTETKAGVGFKAGVKEYKLTYYTPEYETKDTDILAAFRVTPQPGVPPEERGAAVAAESSTGTWTTVWTDGLTSLDRYKGRCYHIEPVPGEEDQFIAYVAYPLDLFEEGSVTNMFTSIVGNVFGFKALRALRLEDLRIPVAYVKTFQGPPHGIQVERDKLNKYGRPLLGCTIKPKLGLSAKNYGRAVYECLRGGLDFTKDDENVNSQPFMRWRDRFLFCAEAIYKSQAETGEIKGHYLNATAGTCEEMIKRAVFARELGVPIVMHDYLTGGFTANTSLSHYCRDNGLLLHIHRAMHAVIDRQKNHGMHFRVLAKALRMSGGDHIHSGTVVGKLEGERDITLGFVDLLRDDYIEKDRSRGIYFTQDWVSLPGVLPVASRGIHVWHMPALTEIFGDDSVLQFGGGTLGHPWGNAPGAVANRVALEACVKARNEGRDLASEGGEIIREACKWSP.

Residues 1–2 constitute a propeptide that is removed on maturation; sequence MS. Pro3 is modified (N-acetylproline). The residue at position 14 (Lys14) is an N6,N6,N6-trimethyllysine. The substrate site is built by Asn123 and Thr173. The active-site Proton acceptor is the Lys175. Lys177 contributes to the substrate binding site. The Mg(2+) site is built by Lys201, Asp203, and Glu204. Lys201 is modified (N6-carboxylysine). His294 functions as the Proton acceptor in the catalytic mechanism. Arg295, His327, and Ser379 together coordinate substrate.

Belongs to the RuBisCO large chain family. Type I subfamily. Heterohexadecamer of 8 large chains and 8 small chains; disulfide-linked. The disulfide link is formed within the large subunit homodimers. Requires Mg(2+) as cofactor. The disulfide bond which can form in the large chain dimeric partners within the hexadecamer appears to be associated with oxidative stress and protein turnover.

The protein localises to the plastid. It localises to the chloroplast. It catalyses the reaction 2 (2R)-3-phosphoglycerate + 2 H(+) = D-ribulose 1,5-bisphosphate + CO2 + H2O. It carries out the reaction D-ribulose 1,5-bisphosphate + O2 = 2-phosphoglycolate + (2R)-3-phosphoglycerate + 2 H(+). In terms of biological role, ruBisCO catalyzes two reactions: the carboxylation of D-ribulose 1,5-bisphosphate, the primary event in carbon dioxide fixation, as well as the oxidative fragmentation of the pentose substrate in the photorespiration process. Both reactions occur simultaneously and in competition at the same active site. The polypeptide is Ribulose bisphosphate carboxylase large chain (Galium corsicum).